The sequence spans 318 residues: Chlorophyllase-2 (318 aa).

A GXSXG motif is present at residues 136-140; sequence GHSRG. Ser-138 functions as the Nucleophile in the catalytic mechanism. Residues Asp-167 and His-244 each act as charge relay system in the active site.

It belongs to the AB hydrolase superfamily. Lipase family. Expressed in leaves, flowers and flower buds, but not in roots.

The protein resides in the cytoplasm. It localises to the cytosol. The enzyme catalyses a chlorophyll + H2O = a chlorophyllide + phytol + H(+). The catalysed reaction is chlorophyll a + H2O = phytol + chlorophyllide a + H(+). It functions in the pathway porphyrin-containing compound metabolism; chlorophyll degradation. Its function is as follows. Catalyzes the hydrolysis of ester bond in chlorophyll to yield chlorophyllide and phytol. Does not seem to be required for chlorophyll degradation during senescence. In Arabidopsis thaliana (Mouse-ear cress), this protein is Chlorophyllase-2.